A 473-amino-acid polypeptide reads, in one-letter code: LETM1 domain-containing protein mdm28, mitochondrial (473 aa).

The N-terminal 73 residues, 1–73 (MLRNRLFKTP…FYNIGSSRLY (73 aa)), are a transit peptide targeting the mitochondrion. The Mitochondrial intermembrane portion of the chain corresponds to 74-161 (STETPTPSKV…LTRTLKDIGR (88 aa)). Residues 162–182 (LVPFSVFVVVPFAELLLPIAV) form a helical membrane-spanning segment. The Mitochondrial matrix segment spans residues 183–473 (KLFPNLLPST…ESNIPKNERK (291 aa)). Residues 205-398 (QLRKTRNEVS…LQDTLASIPD (194 aa)) form the Letm1 RBD domain. Residues 430–473 (EEEAEHVAEHPDLAKKQTEENKATSKPAVSAKSPESNIPKNERK) form a disordered region. Residues 434–452 (EHVAEHPDLAKKQTEENKA) show a composition bias toward basic and acidic residues. Positions 462–473 (SPESNIPKNERK) are enriched in polar residues.

The protein localises to the mitochondrion inner membrane. Functionally, involved in mitochondrial potassium homeostasis through the mitochondrial K(+)/H(+) exchange regulation. The sequence is that of LETM1 domain-containing protein mdm28, mitochondrial (mdm28) from Schizosaccharomyces pombe (strain 972 / ATCC 24843) (Fission yeast).